We begin with the raw amino-acid sequence, 628 residues long: DNA-directed RNA polymerase subunit gamma (628 aa).

Cysteine 71, cysteine 73, cysteine 86, and cysteine 89 together coordinate Zn(2+). Positions 467, 469, and 471 each coordinate Mg(2+).

This sequence belongs to the RNA polymerase beta' chain family. RpoC1 subfamily. In cyanobacteria the RNAP catalytic core is composed of 2 alpha, 1 beta, 1 beta', 1 gamma and 1 omega subunit. When a sigma factor is associated with the core the holoenzyme is formed, which can initiate transcription. It depends on Mg(2+) as a cofactor. Requires Zn(2+) as cofactor.

It catalyses the reaction RNA(n) + a ribonucleoside 5'-triphosphate = RNA(n+1) + diphosphate. Functionally, DNA-dependent RNA polymerase catalyzes the transcription of DNA into RNA using the four ribonucleoside triphosphates as substrates. In Crocosphaera subtropica (strain ATCC 51142 / BH68) (Cyanothece sp. (strain ATCC 51142)), this protein is DNA-directed RNA polymerase subunit gamma.